A 100-amino-acid polypeptide reads, in one-letter code: Aspartyl/glutamyl-tRNA(Asn/Gln) amidotransferase subunit C (100 aa).

This sequence belongs to the GatC family. Heterotrimer of A, B and C subunits.

It carries out the reaction L-glutamyl-tRNA(Gln) + L-glutamine + ATP + H2O = L-glutaminyl-tRNA(Gln) + L-glutamate + ADP + phosphate + H(+). The enzyme catalyses L-aspartyl-tRNA(Asn) + L-glutamine + ATP + H2O = L-asparaginyl-tRNA(Asn) + L-glutamate + ADP + phosphate + 2 H(+). Allows the formation of correctly charged Asn-tRNA(Asn) or Gln-tRNA(Gln) through the transamidation of misacylated Asp-tRNA(Asn) or Glu-tRNA(Gln) in organisms which lack either or both of asparaginyl-tRNA or glutaminyl-tRNA synthetases. The reaction takes place in the presence of glutamine and ATP through an activated phospho-Asp-tRNA(Asn) or phospho-Glu-tRNA(Gln). The polypeptide is Aspartyl/glutamyl-tRNA(Asn/Gln) amidotransferase subunit C (Dictyoglomus thermophilum (strain ATCC 35947 / DSM 3960 / H-6-12)).